We begin with the raw amino-acid sequence, 70 residues long: NADH dehydrogenase [ubiquinone] 1 alpha subcomplex subunit 1 (70 aa).

A helical membrane pass occupies residues 1–21 (MWFEILPGLAIMGVCLVIPGV).

Belongs to the complex I NDUFA1 subunit family. Complex I is composed of 45 different subunits.

The protein localises to the mitochondrion inner membrane. Accessory subunit of the mitochondrial membrane respiratory chain NADH dehydrogenase (Complex I), that is believed not to be involved in catalysis. Complex I functions in the transfer of electrons from NADH to the respiratory chain. The immediate electron acceptor for the enzyme is believed to be ubiquinone. This chain is NADH dehydrogenase [ubiquinone] 1 alpha subcomplex subunit 1 (Ndufa1), found in Mus musculus (Mouse).